The following is a 24-amino-acid chain: Lectin (24 aa).

This sequence belongs to the leguminous lectin family. In terms of assembly, homotetramer.

Its function is as follows. Agglutinates erythrocytes of blood group A. Binds in decreasing order of affinity: N-acetyl-D-galactosamine, D-galactose, and D-galactosamine. The chain is Lectin from Crotalaria pallida (Smooth rattlebox).